We begin with the raw amino-acid sequence, 87 residues long: U9-ctenitoxin-Pn1a (87 aa).

Positions 1–22 (MWLKTQLFVLAIAVIALLEVHA) are cleaved as a signal peptide. A propeptide spanning residues 23–37 (EPESNDNNELVVEEA) is cleaved from the precursor. Disulfide bonds link C40/C54, C47/C64, C53/C73, and C66/C71. Positions 75–87 (KSLREMAAAAFGR) are excised as a propeptide.

It belongs to the neurotoxin 02 (plectoxin) family. 01 (Tx3) subfamily. Expressed by the venom gland.

Its subcellular location is the secreted. In terms of biological role, antagonist of L-type calcium channels (Cav1/CACNA1). The sequence is that of U9-ctenitoxin-Pn1a from Phoneutria nigriventer (Brazilian armed spider).